Consider the following 244-residue polypeptide: Biosynthetic peptidoglycan transglycosylase (244 aa).

The chain crosses the membrane as a helical span at residues 23–43 (LVVIGAWLAGILLFSFLPVPF).

Belongs to the glycosyltransferase 51 family.

Its subcellular location is the cell inner membrane. The enzyme catalyses [GlcNAc-(1-&gt;4)-Mur2Ac(oyl-L-Ala-gamma-D-Glu-L-Lys-D-Ala-D-Ala)](n)-di-trans,octa-cis-undecaprenyl diphosphate + beta-D-GlcNAc-(1-&gt;4)-Mur2Ac(oyl-L-Ala-gamma-D-Glu-L-Lys-D-Ala-D-Ala)-di-trans,octa-cis-undecaprenyl diphosphate = [GlcNAc-(1-&gt;4)-Mur2Ac(oyl-L-Ala-gamma-D-Glu-L-Lys-D-Ala-D-Ala)](n+1)-di-trans,octa-cis-undecaprenyl diphosphate + di-trans,octa-cis-undecaprenyl diphosphate + H(+). Its pathway is cell wall biogenesis; peptidoglycan biosynthesis. Its function is as follows. Peptidoglycan polymerase that catalyzes glycan chain elongation from lipid-linked precursors. This chain is Biosynthetic peptidoglycan transglycosylase, found in Pectobacterium carotovorum subsp. carotovorum (strain PC1).